We begin with the raw amino-acid sequence, 621 residues long: DNA mismatch repair protein MutL (621 aa).

It belongs to the DNA mismatch repair MutL/HexB family.

Functionally, this protein is involved in the repair of mismatches in DNA. It is required for dam-dependent methyl-directed DNA mismatch repair. May act as a 'molecular matchmaker', a protein that promotes the formation of a stable complex between two or more DNA-binding proteins in an ATP-dependent manner without itself being part of a final effector complex. In Petrotoga mobilis (strain DSM 10674 / SJ95), this protein is DNA mismatch repair protein MutL.